Here is a 125-residue protein sequence, read N- to C-terminus: Small ribosomal subunit protein eS6 (125 aa).

Belongs to the eukaryotic ribosomal protein eS6 family. Part of the 30S ribosomal subunit.

In Thermococcus kodakarensis (strain ATCC BAA-918 / JCM 12380 / KOD1) (Pyrococcus kodakaraensis (strain KOD1)), this protein is Small ribosomal subunit protein eS6.